Reading from the N-terminus, the 413-residue chain is Alpha-1-antitrypsin-like protein CM55-ST (413 aa).

An N-terminal signal peptide occupies residues 1 to 24 (MPSSISWGLLLLAALSCLGPGSLA). At Q25 the chain carries Pyrrolidone carboxylic acid. N-linked (GlcNAc...) asparagine glycosylation is found at N65, N102, N165, and N266. The interval 368 to 387 (GGTVLGNIRSTLRYEVIFDR) is RCL.

It belongs to the serpin family. In terms of tissue distribution, expressed in liver.

This chain is Alpha-1-antitrypsin-like protein CM55-ST, found in Tamias sibiricus (Siberian chipmunk).